Here is a 234-residue protein sequence, read N- to C-terminus: MGQKVNPVGLRLGINRNWTSRWFPSARTAPSNIDEDNKIRKFLKKELYYAGVSEIVIERAAKKLRVTVVAARPGLIIGKKGVDIEKVKEGLKTLIKKEVSINIKEVKRPQADAQLAAENVATQLEKRVAFRRAMKKVMQAALKSGAKGIKVCVSGRLAGAEIARTEWYMEGRVPLHTLRAKIDYGFAEAMTVYGIIGVKVWIFKGEVLQKGIQFEKKEEAKEEREPRRSRRGRQ.

A KH type-2 domain is found at 39-107; the sequence is IRKFLKKELY…EVSINIKEVK (69 aa).

Belongs to the universal ribosomal protein uS3 family. Part of the 30S ribosomal subunit. Forms a tight complex with proteins S10 and S14.

In terms of biological role, binds the lower part of the 30S subunit head. Binds mRNA in the 70S ribosome, positioning it for translation. This chain is Small ribosomal subunit protein uS3, found in Helicobacter pylori (strain P12).